Here is a 354-residue protein sequence, read N- to C-terminus: 3-dehydroquinate synthase (354 aa).

NAD(+)-binding positions include 100–104 (GATGD), 124–125 (TT), K136, K145, and 163–166 (FLKT). The Zn(2+) site is built by E178, H242, and H256.

It belongs to the sugar phosphate cyclases superfamily. Dehydroquinate synthase family. The cofactor is Co(2+). Zn(2+) is required as a cofactor. Requires NAD(+) as cofactor.

It localises to the cytoplasm. It carries out the reaction 7-phospho-2-dehydro-3-deoxy-D-arabino-heptonate = 3-dehydroquinate + phosphate. It functions in the pathway metabolic intermediate biosynthesis; chorismate biosynthesis; chorismate from D-erythrose 4-phosphate and phosphoenolpyruvate: step 2/7. In terms of biological role, catalyzes the conversion of 3-deoxy-D-arabino-heptulosonate 7-phosphate (DAHP) to dehydroquinate (DHQ). This chain is 3-dehydroquinate synthase, found in Staphylococcus aureus (strain NCTC 8325 / PS 47).